Reading from the N-terminus, the 605-residue chain is Tegument protein UL47 homolog (605 aa).

Residues 1–75 are disordered; the sequence is MATDNARPRS…DPWKLEPAND (75 aa). Basic residues predominate over residues 8–17; the sequence is PRSRSLRRKS. Residues 54 to 69 are compositionally biased toward basic and acidic residues; it reads GADRDPGTRRGIDPWK.

It belongs to the alphaherpesvirinae HHV-1 UL47 family. In terms of assembly, interacts with US3 kinase. Interacts with UL31 and UL34; these interactions seem important for efficient virion nuclear egress. Interacts with UL41/VHS. In terms of processing, phosphorylated by US3. This phosphorylation is required for proper nuclear localization.

The protein resides in the virion tegument. It is found in the host nucleus. It localises to the host cytoplasm. Tegument protein that can bind to various RNA transcripts. Plays a role in the attenuation of selective viral and cellular mRNA degradation by modulating the activity of host shutoff RNase UL41/VHS. Also plays a role in the primary envelopment of virions in the perinuclear space, probably by interacting with two nuclear egress proteins UL31 and UL34. The polypeptide is Tegument protein UL47 homolog (sORF1) (Amazona oratrix (yellow-headed parrot)).